The primary structure comprises 244 residues: Probable phosphatase NT01CX_1282 (244 aa).

Positions 8, 10, 16, 41, 74, 102, 132, 193, and 195 each coordinate Zn(2+).

It belongs to the PHP family. It depends on Zn(2+) as a cofactor.

In Clostridium novyi (strain NT), this protein is Probable phosphatase NT01CX_1282.